A 404-amino-acid chain; its full sequence is DNA gyrase subunit B (404 aa).

Positions 321–404 (SEIYIVEGDS…VIIMTDADVD (84 aa)) constitute a Toprim domain. Glu327, Asp400, and Asp402 together coordinate Mg(2+).

It belongs to the type II topoisomerase GyrB family. In terms of assembly, heterotetramer, composed of two GyrA and two GyrB chains. In the heterotetramer, GyrA contains the active site tyrosine that forms a transient covalent intermediate with DNA, while GyrB binds cofactors and catalyzes ATP hydrolysis. Mg(2+) is required as a cofactor. The cofactor is Mn(2+). It depends on Ca(2+) as a cofactor.

It is found in the cytoplasm. It carries out the reaction ATP-dependent breakage, passage and rejoining of double-stranded DNA.. In terms of biological role, a type II topoisomerase that negatively supercoils closed circular double-stranded (ds) DNA in an ATP-dependent manner to modulate DNA topology and maintain chromosomes in an underwound state. Negative supercoiling favors strand separation, and DNA replication, transcription, recombination and repair, all of which involve strand separation. Also able to catalyze the interconversion of other topological isomers of dsDNA rings, including catenanes and knotted rings. Type II topoisomerases break and join 2 DNA strands simultaneously in an ATP-dependent manner. The protein is DNA gyrase subunit B (gyrB) of Bacillus mycoides.